Consider the following 336-residue polypeptide: UPF0284 protein PYRAB00380 (336 aa).

It belongs to the UPF0284 family.

This Pyrococcus abyssi (strain GE5 / Orsay) protein is UPF0284 protein PYRAB00380.